Consider the following 228-residue polypeptide: L-ribulose-5-phosphate 4-epimerase UlaF (228 aa).

Substrate contacts are provided by residues 26–27 (GN), 43–44 (SG), and 72–73 (SS). The Zn(2+) site is built by aspartate 74, histidine 93, and histidine 95. The active-site Proton donor/acceptor is aspartate 118. Residue histidine 167 participates in Zn(2+) binding. Residue tyrosine 225 is the Proton donor/acceptor of the active site.

The protein belongs to the aldolase class II family. AraD/FucA subfamily. Zn(2+) is required as a cofactor.

The enzyme catalyses L-ribulose 5-phosphate = D-xylulose 5-phosphate. It participates in cofactor degradation; L-ascorbate degradation; D-xylulose 5-phosphate from L-ascorbate: step 4/4. Catalyzes the isomerization of L-ribulose 5-phosphate to D-xylulose 5-phosphate. Is involved in the anaerobic L-ascorbate utilization. In Escherichia coli O8 (strain IAI1), this protein is L-ribulose-5-phosphate 4-epimerase UlaF.